Consider the following 404-residue polypeptide: Tryptophan synthase beta chain (404 aa).

Lysine 94 bears the N6-(pyridoxal phosphate)lysine mark.

Belongs to the TrpB family. As to quaternary structure, tetramer of two alpha and two beta chains. It depends on pyridoxal 5'-phosphate as a cofactor.

It catalyses the reaction (1S,2R)-1-C-(indol-3-yl)glycerol 3-phosphate + L-serine = D-glyceraldehyde 3-phosphate + L-tryptophan + H2O. It functions in the pathway amino-acid biosynthesis; L-tryptophan biosynthesis; L-tryptophan from chorismate: step 5/5. The beta subunit is responsible for the synthesis of L-tryptophan from indole and L-serine. The protein is Tryptophan synthase beta chain of Staphylococcus aureus (strain JH1).